A 635-amino-acid polypeptide reads, in one-letter code: 1-deoxy-D-xylulose-5-phosphate synthase (635 aa).

Residues histidine 72 and 113–115 (GHA) each bind thiamine diphosphate. Position 144 (aspartate 144) interacts with Mg(2+). Thiamine diphosphate is bound by residues 145–146 (GA), asparagine 174, tyrosine 287, and glutamate 370. Position 174 (asparagine 174) interacts with Mg(2+).

The protein belongs to the transketolase family. DXPS subfamily. Homodimer. The cofactor is Mg(2+). Thiamine diphosphate serves as cofactor.

It catalyses the reaction D-glyceraldehyde 3-phosphate + pyruvate + H(+) = 1-deoxy-D-xylulose 5-phosphate + CO2. Its pathway is metabolic intermediate biosynthesis; 1-deoxy-D-xylulose 5-phosphate biosynthesis; 1-deoxy-D-xylulose 5-phosphate from D-glyceraldehyde 3-phosphate and pyruvate: step 1/1. Functionally, catalyzes the acyloin condensation reaction between C atoms 2 and 3 of pyruvate and glyceraldehyde 3-phosphate to yield 1-deoxy-D-xylulose-5-phosphate (DXP). The protein is 1-deoxy-D-xylulose-5-phosphate synthase of Trichormus variabilis (strain ATCC 29413 / PCC 7937) (Anabaena variabilis).